The chain runs to 765 residues: Transcription factor SKN7 (765 aa).

The interval 1-42 (MPPTNGEGGSQQPQQQQQQQQQQQQQQQQQQQQQQGGSGSSD) is disordered. Positions 11–35 (QQPQQQQQQQQQQQQQQQQQQQQQQ) are enriched in low complexity. The tract at residues 40-145 (SSDFVRKLYK…NLDNIRRKAP (106 aa)) is DNA-binding domain. The stretch at 157–198 (FNASQQQIAALSESLQATQQQLQALQQQCYELEKTNRLLVSE) forms a coiled coil. The hydrophobic repeat HR-A/B stretch occupies residues 160 to 220 (SQQQIAALSE…QASNEIINHL (61 aa)). A disordered region spans residues 371-391 (SSSQITPSQITPPPKDQMSSM). The Response regulatory domain maps to 398–514 (RVLLVEDDKT…NMSRLLRRHL (117 aa)). Asp-449 is modified (4-aspartylphosphate). The tract at residues 542 to 765 (TAGPATTGVG…PGVGVAGFVQ (224 aa)) is transactivation domain. A compositionally biased stretch (gly residues) spans 550–564 (VGVGVAGAPSGGAHG). 2 disordered regions span residues 550–647 (VGVG…PAGL) and 686–765 (PGAM…GFVQ). A compositionally biased stretch (low complexity) spans 569–584 (AQHQQGYAMAPPTTMQ). A compositionally biased stretch (pro residues) spans 626–636 (QPPPPPTPTQP). 2 stretches are compositionally biased toward low complexity: residues 637 to 647 (SPTSAAPPAGL) and 699 to 715 (GVGH…AGAR). The segment covering 755-765 (HPGVGVAGFVQ) has biased composition (gly residues).

The protein belongs to the SKN7 family. In terms of assembly, homotrimer.

Its subcellular location is the nucleus. In terms of biological role, transcription factor that is part of a SLN1-YPD1-SKN7 two-component regulatory system, which controls gene expression in response to changes in the osmolarity of the extracellular environment. Under low osmotic conditions, phosphorylated and activated by the phosphorelay intermediate protein YPD1. Also activated in response to oxidative stress, independent on the two-component regulatory system. Regulates heat shock genes in response to oxidative stress and genes involved in cell wall integrity in response to osmotic changes. The chain is Transcription factor SKN7 from Chaetomium thermophilum (strain DSM 1495 / CBS 144.50 / IMI 039719) (Thermochaetoides thermophila).